A 322-amino-acid polypeptide reads, in one-letter code: Protein-L-isoaspartate O-methyltransferase (322 aa).

The tract at residues 1–101 (MSGERAKRFP…AKQGDRSAAP (101 aa)) is disordered. The segment covering 14–29 (EDLKREPRKPEGRVAE) has biased composition (basic and acidic residues). 2 stretches are compositionally biased toward low complexity: residues 33–51 (AGDA…PAAA) and 76–91 (HAPA…PQGG). The active site involves S170.

It belongs to the methyltransferase superfamily. L-isoaspartyl/D-aspartyl protein methyltransferase family.

The protein localises to the cytoplasm. The enzyme catalyses [protein]-L-isoaspartate + S-adenosyl-L-methionine = [protein]-L-isoaspartate alpha-methyl ester + S-adenosyl-L-homocysteine. In terms of biological role, catalyzes the methyl esterification of L-isoaspartyl residues in peptides and proteins that result from spontaneous decomposition of normal L-aspartyl and L-asparaginyl residues. It plays a role in the repair and/or degradation of damaged proteins. This is Protein-L-isoaspartate O-methyltransferase from Burkholderia mallei (strain NCTC 10247).